Reading from the N-terminus, the 87-residue chain is Omega-lycotoxin-Am1c (87 aa).

The first 17 residues, 1–17 (MKLSIFFVLFFIAIAYC), serve as a signal peptide directing secretion. Positions 18–40 (QPEFLDDEEDEVEETLPVAEEGR) are excised as a propeptide. Disulfide bonds link cysteine 44–cysteine 59, cysteine 51–cysteine 64, cysteine 58–cysteine 84, and cysteine 66–cysteine 82.

This sequence belongs to the neurotoxin omega-lctx family. In terms of tissue distribution, expressed by the venom gland.

It is found in the secreted. Its function is as follows. Modulates Cav2.1/CACNA1A voltage-gated calcium channels (P/Q-type currents) in rat cerebellar Purkinje cells and hippocampal CA1-CA3 neurons. At saturating concentrations (&gt;10 nM) decelerates activation kinetics and slightly increases peak amplitude without affecting deactivation kinetics. In vivo, does not cause death when intravenously injected into mice. In rat models, through its activity on Cav2.1/CACNA1A, has an ameliorative effect on memory defects provoked by hyperstimulation of N-methyl-D-aspartate receptors (NMDARs) in the hippocampus. This is Omega-lycotoxin-Am1c from Alopecosa marikovskyi (Wolf spider).